The sequence spans 338 residues: Methionyl-tRNA formyltransferase (338 aa).

110–113 contacts (6S)-5,6,7,8-tetrahydrofolate; sequence SLLP.

The protein belongs to the Fmt family.

The enzyme catalyses L-methionyl-tRNA(fMet) + (6R)-10-formyltetrahydrofolate = N-formyl-L-methionyl-tRNA(fMet) + (6S)-5,6,7,8-tetrahydrofolate + H(+). Its function is as follows. Attaches a formyl group to the free amino group of methionyl-tRNA(fMet). The formyl group appears to play a dual role in the initiator identity of N-formylmethionyl-tRNA by promoting its recognition by IF2 and preventing the misappropriation of this tRNA by the elongation apparatus. This Parasynechococcus marenigrum (strain WH8102) protein is Methionyl-tRNA formyltransferase.